The sequence spans 476 residues: GTPase Der (476 aa).

EngA-type G domains follow at residues 3–167 (FTVA…GEER) and 205–380 (LRVA…KVWN). Residues 9–16 (GRPNVGKS), 56–60 (DTAGL), 119–122 (NKSE), 211–218 (GRPNAGKS), 258–262 (DTAGM), and 323–326 (NKWD) each bind GTP. Residues 381-465 (RRISTARLNR…PIRVHFRASE (85 aa)) enclose the KH-like domain.

This sequence belongs to the TRAFAC class TrmE-Era-EngA-EngB-Septin-like GTPase superfamily. EngA (Der) GTPase family. In terms of assembly, associates with the 50S ribosomal subunit.

Functionally, GTPase that plays an essential role in the late steps of ribosome biogenesis. The protein is GTPase Der of Rhizobium meliloti (strain 1021) (Ensifer meliloti).